Consider the following 132-residue polypeptide: Small ribosomal subunit protein uS8 (132 aa).

This sequence belongs to the universal ribosomal protein uS8 family. Part of the 30S ribosomal subunit. Contacts proteins S5 and S12.

One of the primary rRNA binding proteins, it binds directly to 16S rRNA central domain where it helps coordinate assembly of the platform of the 30S subunit. The protein is Small ribosomal subunit protein uS8 of Mycobacterium marinum (strain ATCC BAA-535 / M).